The following is a 157-amino-acid chain: 6,7-dimethyl-8-ribityllumazine synthase (157 aa).

5-amino-6-(D-ribitylamino)uracil contacts are provided by residues Phe-22, 56-58 (AME), and 80-82 (AVV). 85-86 (ET) lines the (2S)-2-hydroxy-3-oxobutyl phosphate pocket. His-88 acts as the Proton donor in catalysis. Position 113 (Phe-113) interacts with 5-amino-6-(D-ribitylamino)uracil. Arg-127 provides a ligand contact to (2S)-2-hydroxy-3-oxobutyl phosphate.

It belongs to the DMRL synthase family.

It catalyses the reaction (2S)-2-hydroxy-3-oxobutyl phosphate + 5-amino-6-(D-ribitylamino)uracil = 6,7-dimethyl-8-(1-D-ribityl)lumazine + phosphate + 2 H2O + H(+). The protein operates within cofactor biosynthesis; riboflavin biosynthesis; riboflavin from 2-hydroxy-3-oxobutyl phosphate and 5-amino-6-(D-ribitylamino)uracil: step 1/2. Functionally, catalyzes the formation of 6,7-dimethyl-8-ribityllumazine by condensation of 5-amino-6-(D-ribitylamino)uracil with 3,4-dihydroxy-2-butanone 4-phosphate. This is the penultimate step in the biosynthesis of riboflavin. This Levilactobacillus brevis (strain ATCC 367 / BCRC 12310 / CIP 105137 / JCM 1170 / LMG 11437 / NCIMB 947 / NCTC 947) (Lactobacillus brevis) protein is 6,7-dimethyl-8-ribityllumazine synthase.